We begin with the raw amino-acid sequence, 975 residues long: MEDYEQELCGVEDDFHNQFAAELEVLAELEGASTPSPSGVPLFTAGRPPRTFEEALARGDAASSPAPAASVGSSQGGARKRQVDADLQPAGSLPHAPRIKRPRLQVVKRLNFRSEEMEEPPPPDSSPTDITPPPSPEDLAELWGHGVSEAAADVGLTRASPAARNPVLRRPPILEDYVHVTSTEGVRAYLVLRADPMAPGVQGSLLHVPWRGGGQLDLLGVSLASLKKQVDGERRERLLQEAQKLSDTLHSLRSGEEEAAQPLGAPEEEPTDGQDASSHCLWVDEFAPRHYTELLSDDFTNRCLLKWLKLWDLVVFGHERPSRKPRPSVEPARVSKEATAPGKWKSHEQVLEEMLEAGLDPSQRPKQKVALLCGPPGLGKTTLAHVIARHAGYSVVEMNASDDRSPEVFRTRIEAATQMESVLGAGGKPNCLVIDEIDGAPVAAINVLLSILNRKGPQEVGPQGPAVPSGGGRRRRAEGGLLMRPIICICNDQFAPSLRQLKQQAFLLHFPPTLPSRLVQRLQEVSLRQGMRADPGVLAALCEKTDNDIRACINTLQFLYSRGQRELSVRDVQATRVGLKDQRRGLFSVWQEVFQLPRAQRRRVGQDPALPADTLLLGDGDAGSLTSASQRFYRVLHAAASAGEHEKVVQGLFDNFLRLRLRDSSLGAVCVALDWLAFDDLLAGAAHHSQSFQLLRYPPFLPVAFHVLFASSHTPRITFPSSQQEAQNRMSQMRNLIQTLVSGIAPATRSRATPQALLLDALCLLLDILAPKLRPVSTQLYSTREKQQLASLVGTMLAYSLTYRQERTPDGQYIYRLEPNVEELCRFPELPARKPLTYQTKQLIAREIEVEKMRRAEASARVENSPQVDGSPPGLEGLLGGIGEKGVHRPAPRNHEQRLEHIMRRAAREEQPEKDFFGRVVVRSTAVPSAGDTAPEQDSVERRMGTAVGRSEVWFRFNEGVSNAVRRSLYIRDLL.

Disordered regions lie at residues 30-83 (EGAS…KRQV) and 114-141 (SEEM…DLAE). The residue at position 51 (T51) is a Phosphothreonine. Residues 58 to 77 (RGDAASSPAPAASVGSSQGG) show a composition bias toward low complexity. S64 is subject to Phosphoserine. Over residues 122 to 136 (PPDSSPTDITPPPSP) the composition is skewed to pro residues. A Phosphoserine modification is found at S225. Disordered stretches follow at residues 246 to 276 (SDTL…GQDA) and 320 to 346 (RPSR…KWKS). 374 to 381 (GPPGLGKT) lines the ATP pocket. The disordered stretch occupies residues 858–896 (ASARVENSPQVDGSPPGLEGLLGGIGEKGVHRPAPRNHE). S871 carries the phosphoserine modification.

The protein belongs to the activator 1 small subunits family. CTF18 subfamily. In terms of assembly, component of the CTF18-RFC complex, which consists of CTF18, CTF8, DCC1, RFC2, RFC3, RFC4 and RFC5. During assembly of the CTF18-RFC complex, CTF18 may first assemble into a subcomplex with RFC2, RFC3, RFC4 and RFC5. CTF18 then interacts directly with CTF8, which in turn interacts with DCC1. The CTF18-RFC complex associates with PCNA and with DNA polymerase POLH. The CTF18-RFC complex does not interact with the Rad9/Rad1/Hus1 complex. CTF18 interacts with SMC1A and RAD21. Interacts with DDX11.

It is found in the nucleus. Its function is as follows. Chromosome cohesion factor involved in sister chromatid cohesion and fidelity of chromosome transmission. Component of one of the cell nuclear antigen loader complexes, CTF18-replication factor C (CTF18-RFC), which consists of CTF18, CTF8, DCC1, RFC2, RFC3, RFC4 and RFC5. The CTF18-RFC complex binds to single-stranded and primed DNAs and has weak ATPase activity that is stimulated by the presence of primed DNA, replication protein A (RPA) and by proliferating cell nuclear antigen (PCNA). The CTF18-RFC complex catalyzes the ATP-dependent loading of PCNA onto primed and gapped DNA. Interacts with and stimulates DNA polymerase POLH. During DNA repair synthesis, involved in loading DNA polymerase POLE at the sites of local damage. The polypeptide is Chromosome transmission fidelity protein 18 homolog (CHTF18) (Homo sapiens (Human)).